Reading from the N-terminus, the 179-residue chain is Ribosome maturation factor RimM (179 aa).

A PRC barrel domain is found at Pro102–Leu173.

The protein belongs to the RimM family. In terms of assembly, binds ribosomal protein uS19.

It localises to the cytoplasm. An accessory protein needed during the final step in the assembly of 30S ribosomal subunit, possibly for assembly of the head region. Essential for efficient processing of 16S rRNA. May be needed both before and after RbfA during the maturation of 16S rRNA. It has affinity for free ribosomal 30S subunits but not for 70S ribosomes. The chain is Ribosome maturation factor RimM from Synechococcus sp. (strain JA-2-3B'a(2-13)) (Cyanobacteria bacterium Yellowstone B-Prime).